A 312-amino-acid polypeptide reads, in one-letter code: Glutathione synthetase (312 aa).

Residues 125–309 (KIFVTEFPDL…IAALFWDAVE (185 aa)) form the ATP-grasp domain. ATP is bound at residue 151–207 (RREFGDIILKPLYGNGGAGVFHLADGDRNLTSLLEMFGQLFREPFIAQRYLKDVRAG). The Mg(2+) site is built by Glu280 and Asn282.

The protein belongs to the prokaryotic GSH synthase family. Mg(2+) is required as a cofactor. The cofactor is Mn(2+).

The enzyme catalyses gamma-L-glutamyl-L-cysteine + glycine + ATP = glutathione + ADP + phosphate + H(+). It functions in the pathway sulfur metabolism; glutathione biosynthesis; glutathione from L-cysteine and L-glutamate: step 2/2. The protein is Glutathione synthetase of Brucella melitensis biotype 1 (strain ATCC 23456 / CCUG 17765 / NCTC 10094 / 16M).